The sequence spans 380 residues: Cytochrome b (380 aa).

The next 4 helical transmembrane spans lie at 34-54 (FGSL…FLAM), 78-99 (WLLR…YFHI), 114-134 (WNIG…GYVL), and 179-199 (FFTF…IHLL). Residues histidine 84 and histidine 98 each contribute to the heme b site. Heme b is bound by residues histidine 183 and histidine 197. An a ubiquinone-binding site is contributed by histidine 202. The next 4 helical transmembrane spans lie at 227-247 (YKDL…STFA), 289-309 (LGGV…PIIH), 321-341 (IAKT…WIGG), and 348-368 (FITI…LLIP).

It belongs to the cytochrome b family. The cytochrome bc1 complex contains 3 respiratory subunits (MT-CYB, CYC1 and UQCRFS1), 2 core proteins (UQCRC1 and UQCRC2) and probably 6 low-molecular weight proteins. Requires heme b as cofactor.

It is found in the mitochondrion inner membrane. Component of the ubiquinol-cytochrome c reductase complex (complex III or cytochrome b-c1 complex) that is part of the mitochondrial respiratory chain. The b-c1 complex mediates electron transfer from ubiquinol to cytochrome c. Contributes to the generation of a proton gradient across the mitochondrial membrane that is then used for ATP synthesis. The sequence is that of Cytochrome b (mt-cyb) from Rana amurensis (Siberian wood frog).